A 196-amino-acid polypeptide reads, in one-letter code: MPGMVPPHVPPQMLNIPQTSLQAKPVAPQVPSPGGAPGQGPYPYSLSEPAPLTLDTSGKNLTEQNSYSNIPHEGKHTPLYERSLPINPAQSGSPNHVDSAYFPGSSTSSSSDNDEGSGGATKYTIYWGFRATDHHVQGRDSQARGTAAHWHGGHVCSPNVFWRISHGPAQQLTFPTEQAAPPVCPAPASRRLSAPG.

A compositionally biased stretch (pro residues) spans 1-10 (MPGMVPPHVP). 2 disordered regions span residues 1-118 (MPGM…EGSG) and 176-196 (TEQAAPPVCPAPASRRLSAPG). The span at 25 to 45 (PVAPQVPSPGGAPGQGPYPYS) shows a compositional bias: low complexity. Polar residues predominate over residues 54–69 (LDTSGKNLTEQNSYSN).

This is an uncharacterized protein from Homo sapiens (Human).